A 540-amino-acid polypeptide reads, in one-letter code: Probable feruloyl esterase B-1 (540 aa).

An N-terminal signal peptide occupies residues 1–18; it reads MLVMQLLLPFLASTAAAA. N-linked (GlcNAc...) asparagine glycosylation is found at Asn-28, Asn-49, Asn-66, Asn-95, Asn-113, and Asn-195. Intrachain disulfides connect Cys-41/Cys-90 and Cys-76/Cys-129. Cystine bridges form between Cys-202–Cys-458, Cys-271–Cys-288, and Cys-297–Cys-308. The active-site Acyl-ester intermediate is Ser-203. Asn-234 carries an N-linked (GlcNAc...) asparagine glycan. Ca(2+) contacts are provided by Asp-272, Asp-275, Ala-277, Asp-279, and Ile-281. 3 N-linked (GlcNAc...) asparagine glycosylation sites follow: Asn-298, Asn-328, and Asn-367. Catalysis depends on charge relay system residues Asp-417 and His-457. Asn-506 is a glycosylation site (N-linked (GlcNAc...) asparagine). A disulfide bridge links Cys-517 with Cys-539.

Belongs to the tannase family. As to quaternary structure, homodimer.

The protein resides in the secreted. It carries out the reaction feruloyl-polysaccharide + H2O = ferulate + polysaccharide.. Functionally, involved in degradation of plant cell walls. Hydrolyzes the feruloyl-arabinose ester bond in arabinoxylans as well as the feruloyl-galactose and feruloyl-arabinose ester bonds in pectin. The polypeptide is Probable feruloyl esterase B-1 (faeB-1) (Aspergillus oryzae (strain ATCC 42149 / RIB 40) (Yellow koji mold)).